We begin with the raw amino-acid sequence, 542 residues long: MKPIKEIADQLGLKDDVLYPYGHYIAKIDHRFLKSLENREDGKLILVTAVTPTPAGEGKTTTSIGLSMSLNRIGKKSIVTLREPSLGPTLGLKGGATGGGRSRVLPSDEINLHFTGDMHAVASAHNLLAAVLDSHIKHGNELKIDITRVFWKRTMDMNDRALRSIVIGLGGSANGFPREDSFIITAASEVMAVLALSENMKDLKERLGKIIVALNTDRKIVRVSDLGIQGAMAVLLKDAINPNLVQTTEGTPALIHCGPFANIAHGTNSIIATKMAMKLSEYTVTEAGFGADLGAEKFIDFVSRVGGFYPNAAVLVATVRALKYHGGADLKNIHEENLEALKEGFKNLRVHLENLRKFNLPVVVALNRFITDTEKEIAYVVKECEKLGVRVAVSEVFEKGSEGGVELAKAVTEAVKDVKPVYLYEMNDPVEKKIEILAKEIYRAGRVEFSDTAKNALKFIKKHGFDELPVIVAKTPKSISHDPSLRGAPEGYTFVVSDLFVSAGAGFVVALSGDINLMPGLPERPNALNMDVDDSGNIVGVS.

Residue 53–60 (TPAGEGKT) participates in ATP binding.

This sequence belongs to the formate--tetrahydrofolate ligase family.

It catalyses the reaction (6S)-5,6,7,8-tetrahydrofolate + formate + ATP = (6R)-10-formyltetrahydrofolate + ADP + phosphate. It functions in the pathway one-carbon metabolism; tetrahydrofolate interconversion. In Thermotoga petrophila (strain ATCC BAA-488 / DSM 13995 / JCM 10881 / RKU-1), this protein is Formate--tetrahydrofolate ligase.